Consider the following 231-residue polypeptide: Somatolactin-1 (231 aa).

The signal sequence occupies residues methionine 1 to serine 24. Disulfide bonds link cysteine 29–cysteine 39, cysteine 89–cysteine 205, and cysteine 222–cysteine 230. Asparagine 145 carries N-linked (GlcNAc...) asparagine glycosylation.

The protein belongs to the somatotropin/prolactin family. In terms of tissue distribution, pituitary gland.

Its subcellular location is the secreted. The chain is Somatolactin-1 from Sparus aurata (Gilthead sea bream).